The following is a 69-amino-acid chain: Large ribosomal subunit protein bL31 (69 aa).

Residues Cys17, Cys19, Cys37, and Cys40 each coordinate Zn(2+).

This sequence belongs to the bacterial ribosomal protein bL31 family. Type A subfamily. As to quaternary structure, part of the 50S ribosomal subunit. Zn(2+) serves as cofactor.

In terms of biological role, binds the 23S rRNA. The chain is Large ribosomal subunit protein bL31 from Caldicellulosiruptor saccharolyticus (strain ATCC 43494 / DSM 8903 / Tp8T 6331).